The following is a 350-amino-acid chain: MTVSPVALRRKTECKPHPTARYWKKCDVEALFGLPFLELVHQAAEVHRQNFNPREIQLSTLLSIKTGGCPEDCAYCPQSAHHNTNLGKEQMMDVDEIVEKAKIAKSRGASRFCMGAAWRGPKPKDVETVSAIIKAVKGLGMETCGTFGMLEEGMAEDLKEAGLDYYNHNLDTDPDRYNDIIHTRRHEDRMDTLGKVRNAGLKVCCGGIVGMNETRAERAGLIASLANLDPQPESVPINRLVKVEGTPLADAEDLDWTEFVRTIAVARITMPQSYVRLSAGRSNMPEAMQAMCFMAGANSIFYGDKLLTTGNPDEDGDRILMEKLNLYPLQFELEGEVAEVEKASGIKVDY.

The Radical SAM core domain maps to 54–278 (REIQLSTLLS…TMPQSYVRLS (225 aa)). 3 residues coordinate [4Fe-4S] cluster: C69, C73, and C76. Positions 113, 144, 204, and 276 each coordinate [2Fe-2S] cluster.

The protein belongs to the radical SAM superfamily. Biotin synthase family. In terms of assembly, homodimer. [4Fe-4S] cluster serves as cofactor. The cofactor is [2Fe-2S] cluster.

It carries out the reaction (4R,5S)-dethiobiotin + (sulfur carrier)-SH + 2 reduced [2Fe-2S]-[ferredoxin] + 2 S-adenosyl-L-methionine = (sulfur carrier)-H + biotin + 2 5'-deoxyadenosine + 2 L-methionine + 2 oxidized [2Fe-2S]-[ferredoxin]. It functions in the pathway cofactor biosynthesis; biotin biosynthesis; biotin from 7,8-diaminononanoate: step 2/2. Its function is as follows. Catalyzes the conversion of dethiobiotin (DTB) to biotin by the insertion of a sulfur atom into dethiobiotin via a radical-based mechanism. This is Biotin synthase from Neisseria meningitidis serogroup C / serotype 2a (strain ATCC 700532 / DSM 15464 / FAM18).